An 88-amino-acid polypeptide reads, in one-letter code: Small ribosomal subunit protein uS19 (88 aa).

Belongs to the universal ribosomal protein uS19 family.

In terms of biological role, protein S19 forms a complex with S13 that binds strongly to the 16S ribosomal RNA. The protein is Small ribosomal subunit protein uS19 of Chlamydia felis (strain Fe/C-56) (Chlamydophila felis).